Here is an 81-residue protein sequence, read N- to C-terminus: Cytochrome b559 subunit alpha (81 aa).

2 residues coordinate heme: Arg18 and His23. Residues 19-40 traverse the membrane as a helical segment; it reads YWVIHSITIPMLFIAGWLFVST.

It belongs to the PsbE/PsbF family. Heterodimer of an alpha subunit and a beta subunit. PSII is composed of 1 copy each of membrane proteins PsbA, PsbB, PsbC, PsbD, PsbE, PsbF, PsbH, PsbI, PsbJ, PsbK, PsbL, PsbM, PsbT, PsbX, PsbY, PsbZ, Psb30/Ycf12, peripheral proteins PsbO, CyanoQ (PsbQ), PsbU, PsbV and a large number of cofactors. It forms dimeric complexes. The cofactor is heme b.

It is found in the cellular thylakoid membrane. In terms of biological role, this b-type cytochrome is tightly associated with the reaction center of photosystem II (PSII). PSII is a light-driven water:plastoquinone oxidoreductase that uses light energy to abstract electrons from H(2)O, generating O(2) and a proton gradient subsequently used for ATP formation. It consists of a core antenna complex that captures photons, and an electron transfer chain that converts photonic excitation into a charge separation. The sequence is that of Cytochrome b559 subunit alpha from Synechocystis sp. (strain ATCC 27184 / PCC 6803 / Kazusa).